A 192-amino-acid chain; its full sequence is Ribosomal RNA large subunit methyltransferase E (192 aa).

S-adenosyl-L-methionine-binding residues include Gly46, Trp48, Asp63, Asp79, and Asp102. Residue Lys142 is the Proton acceptor of the active site.

The protein belongs to the class I-like SAM-binding methyltransferase superfamily. RNA methyltransferase RlmE family.

It is found in the cytoplasm. It carries out the reaction uridine(2552) in 23S rRNA + S-adenosyl-L-methionine = 2'-O-methyluridine(2552) in 23S rRNA + S-adenosyl-L-homocysteine + H(+). In terms of biological role, specifically methylates the uridine in position 2552 of 23S rRNA at the 2'-O position of the ribose in the fully assembled 50S ribosomal subunit. This Wolbachia pipientis wMel protein is Ribosomal RNA large subunit methyltransferase E.